The sequence spans 297 residues: HTH-type transcriptional regulator ArgP (297 aa).

Positions 4-60 (PDYRTLQALDAVIRERGFERAAQKLCITQSAVSQRIKQLENMFGQPLLVRTVPPRPT) constitute an HTH lysR-type domain. Positions 21 to 40 (FERAAQKLCITQSAVSQRIK) form a DNA-binding region, H-T-H motif.

Belongs to the LysR transcriptional regulatory family. In terms of assembly, homodimer.

Functionally, controls the transcription of genes involved in arginine and lysine metabolism. This Enterobacter sp. (strain 638) protein is HTH-type transcriptional regulator ArgP.